Reading from the N-terminus, the 364-residue chain is Zinc finger protein CONSTANS-LIKE 12 (364 aa).

Zn(2+)-binding residues include Cys5, Cys8, Cys28, and His33. The segment at 5-47 (CDHCATSQALIYCKSDLAKLCLNCDVHVHSANPLSHRHIRSLI) adopts a B box-type 1; atypical zinc-finger fold. The segment at 48 to 88 (CEKCFSQPAAIRCLDEKVSYCQGCHWHESNCSELGHRVQSL) adopts a B box-type 2; degenerate zinc-finger fold. The CCT domain occupies 280–322 (QDCGMSPGFIMSEAPWETNFEVSCPQARNEAKLRYKEKKLKRS).

This sequence belongs to the CONSTANS family.

The protein resides in the nucleus. The polypeptide is Zinc finger protein CONSTANS-LIKE 12 (COL12) (Arabidopsis thaliana (Mouse-ear cress)).